The primary structure comprises 419 residues: Gamma-glutamyl phosphate reductase (419 aa).

It belongs to the gamma-glutamyl phosphate reductase family.

The protein localises to the cytoplasm. The catalysed reaction is L-glutamate 5-semialdehyde + phosphate + NADP(+) = L-glutamyl 5-phosphate + NADPH + H(+). It participates in amino-acid biosynthesis; L-proline biosynthesis; L-glutamate 5-semialdehyde from L-glutamate: step 2/2. Its function is as follows. Catalyzes the NADPH-dependent reduction of L-glutamate 5-phosphate into L-glutamate 5-semialdehyde and phosphate. The product spontaneously undergoes cyclization to form 1-pyrroline-5-carboxylate. The polypeptide is Gamma-glutamyl phosphate reductase (Ruthia magnifica subsp. Calyptogena magnifica).